We begin with the raw amino-acid sequence, 396 residues long: Elongation factor Tu (396 aa).

In terms of domain architecture, tr-type G spans 10–206; it reads KPHVNVGTIG…ALDTYIPEPE (197 aa). Positions 19 to 26 are G1; sequence GHVDHGKT. Position 19-26 (19-26) interacts with GTP; it reads GHVDHGKT. T26 contacts Mg(2+). The interval 60–64 is G2; it reads GITIN. The tract at residues 81-84 is G3; that stretch reads DCPG. GTP contacts are provided by residues 81 to 85 and 136 to 139; these read DCPGH and NKCD. Residues 136 to 139 form a G4 region; the sequence is NKCD. A G5 region spans residues 174–176; sequence SAL.

The protein belongs to the TRAFAC class translation factor GTPase superfamily. Classic translation factor GTPase family. EF-Tu/EF-1A subfamily. As to quaternary structure, monomer.

It localises to the cytoplasm. The enzyme catalyses GTP + H2O = GDP + phosphate + H(+). Its function is as follows. GTP hydrolase that promotes the GTP-dependent binding of aminoacyl-tRNA to the A-site of ribosomes during protein biosynthesis. The sequence is that of Elongation factor Tu from Acinetobacter baylyi (strain ATCC 33305 / BD413 / ADP1).